The sequence spans 429 residues: Histidinol dehydrogenase (429 aa).

Positions 127, 188, and 211 each coordinate NAD(+). Substrate contacts are provided by S234, Q256, and H259. Zn(2+) contacts are provided by Q256 and H259. Active-site proton acceptor residues include E324 and H325. Residues H325, D358, E412, and H417 each coordinate substrate. D358 is a Zn(2+) binding site. A Zn(2+)-binding site is contributed by H417.

The protein belongs to the histidinol dehydrogenase family. Zn(2+) is required as a cofactor.

The enzyme catalyses L-histidinol + 2 NAD(+) + H2O = L-histidine + 2 NADH + 3 H(+). The protein operates within amino-acid biosynthesis; L-histidine biosynthesis; L-histidine from 5-phospho-alpha-D-ribose 1-diphosphate: step 9/9. In terms of biological role, catalyzes the sequential NAD-dependent oxidations of L-histidinol to L-histidinaldehyde and then to L-histidine. The chain is Histidinol dehydrogenase from Bacillus anthracis.